A 63-amino-acid polypeptide reads, in one-letter code: Chromatin protein Cren7 (63 aa).

Belongs to the Cren7 family. Monomer. In terms of processing, methylated at multiple sites, to varying extents.

It is found in the chromosome. It localises to the cytoplasm. Functionally, a chromatin protein, binds double-stranded DNA without sequence specificity. Constrains negative DNA supercoils. The protein is Chromatin protein Cren7 of Pyrobaculum calidifontis (strain DSM 21063 / JCM 11548 / VA1).